Consider the following 365-residue polypeptide: DNA N6-methyl methyltransferase (365 aa).

This sequence belongs to the MT-A70-like family.

The catalysed reaction is a 2'-deoxyadenosine in DNA + S-adenosyl-L-methionine = an N(6)-methyl-2'-deoxyadenosine in DNA + S-adenosyl-L-homocysteine + H(+). Methylates DNA on the 6th position of adenine (N(6)-methyladenosine). N(6)-methyladenosine (m6A) DNA is involved in epigenetic transgenerational inheritance. This chain is DNA N6-methyl methyltransferase, found in Caenorhabditis elegans.